Here is a 315-residue protein sequence, read N- to C-terminus: Apolipoprotein F (315 aa).

Positions 1-24 are cleaved as a signal peptide; sequence MHSLRLILMSIQLLCYLLLCPVDA. Residues 25–154 constitute a propeptide that is removed on maturation; sequence TSHGEATSVS…EQPGPKRAKR (130 aa).

Belongs to the apolipoprotein F family. Liver.

It is found in the secreted. Minor apolipoprotein that associates with LDL. Inhibits cholesteryl ester transfer protein (CETP) activity and appears to be an important regulator of cholesterol transport. Also associates to a lesser degree with VLDL, Apo-AI and Apo-AII. The protein is Apolipoprotein F (Apof) of Mus musculus (Mouse).